Reading from the N-terminus, the 452-residue chain is CASP-like protein 4A1 (452 aa).

Basic and acidic residues predominate over residues 1–17 (MGLRDSLKEREDRRSSE). Disordered regions lie at residues 1–39 (MGLRDSLKEREDRRSSEEEGDARQSWMTRESTTGWRKES), 71–147 (RAGP…ARSS), and 164–283 (AKYV…VQFR). Topologically, residues 1-305 (MGLRDSLKER…KRRAAAMQRT (305 aa)) are cytoplasmic. Residues 25 to 34 (SWMTRESTTG) are compositionally biased toward polar residues. Low complexity-rich tracts occupy residues 105-126 (QAQATASPSPSPSPTRGRTGSG) and 190-205 (GWYSWNGGRTRTAAPP). The segment covering 211–272 (DPPPAPPRRQ…TAPAPAPVPA (62 aa)) has biased composition (pro residues). The helical transmembrane segment at 306–326 (ALLARGAAAGLCLAALAVLAA) threads the bilayer. At 327–347 (DTRKGWARDSYSNYTQFRYSE) the chain is on the extracellular side. Asn339 carries an N-linked (GlcNAc...) asparagine glycan. The chain crosses the membrane as a helical span at residues 348 to 368 (AVNVIGFIYSVFQFVALVELM). The Cytoplasmic segment spans residues 369-389 (RRNKHLIPHPKRDLFDFTMDQ). The chain crosses the membrane as a helical span at residues 390-406 (VLTYLLISSSSSATARV). Topologically, residues 407–423 (SDLIDNWGSDPFPSMAN) are extracellular. The N-linked (GlcNAc...) asparagine glycan is linked to Asn423. The helical transmembrane segment at 424-444 (GSIAISFLAFAVFAICSLISA) threads the bilayer. Residues 445 to 452 (YNLFRRDV) lie on the Cytoplasmic side of the membrane.

Belongs to the Casparian strip membrane proteins (CASP) family. In terms of assembly, homodimer and heterodimers.

The protein resides in the cell membrane. This Sorghum bicolor (Sorghum) protein is CASP-like protein 4A1.